The sequence spans 467 residues: F-box/kelch-repeat protein SKIP11 (467 aa).

Residues 77-117 (LSGGEEQADAAIGDGSSSRQEQEQQSDFNDNGGDSSDSHSL) form a disordered region. Residues 92–111 (SSSRQEQEQQSDFNDNGGDS) show a composition bias toward low complexity. The region spanning 116-163 (SLINEIGRDNSIDCLIRCSRSDYGSIASLNRNFRSLVKSGEIYRLRRQ) is the F-box domain. Kelch repeat units follow at residues 159–210 (RLRR…KESL), 215–259 (DLLV…SLGE), 261–307 (AIFA…FMDG), 308–356 (KFYV…DMSP), and 365–411 (AVVN…GLAF).

In terms of assembly, part of a SCF (ASK-cullin-F-box) protein ligase complex. Interacts with SKP1A/ASK1 and SPK1B/ASK2.

It localises to the nucleus. The protein operates within protein modification; protein ubiquitination. In terms of biological role, component of SCF(ASK-cullin-F-box) E3 ubiquitin ligase complexes, which may mediate the ubiquitination and subsequent proteasomal degradation of target proteins. The sequence is that of F-box/kelch-repeat protein SKIP11 (SKIP11) from Arabidopsis thaliana (Mouse-ear cress).